A 703-amino-acid polypeptide reads, in one-letter code: Hyperosmolality-gated Ca2+ permeable channel 2.3 (703 aa).

The Extracellular segment spans residues 1–3 (MLL). The chain crosses the membrane as a helical span at residues 4–26 (SALLTSVGINLGLCFLFFTLYSI). The Cytoplasmic segment spans residues 27–81 (LRKQPSNVTVYGPRLVKKDGKSQQSNEFNLERLLPTAGWVKRALEPTNDEILSNL). Residues 82–115 (GLDALVFIRVFVFSIRVFSFASVVGIFILLPVNY) traverse the membrane as a helical segment. Residues 116–143 (MGTEFEEFFDLPKKSMDNFSISNVNDGS) are Extracellular-facing. Residues 144–165 (NKLWIHFCAIYIFTAVVCSLLY) form a helical membrane-spanning segment. At 166-355 (YEHKYILTKR…TASFVRRWIS (190 aa)) the chain is on the cytoplasmic side. The stretch at 228 to 300 (RTDKLKVLMN…LKQSLLAGEE (73 aa)) forms a coiled coil. A helical membrane pass occupies residues 356–382 (NVVVLVAFVALLILYIVPVVLVQGLAN). Topologically, residues 383-410 (LHQLETWFPFLKGILNMKIVSQVITGYL) are extracellular. Residues 411–432 (PSLIFQLFLLIVPPIMLLLSSM) form a helical membrane-spanning segment. Over 433-436 (QGFI) the chain is Cytoplasmic. The chain crosses the membrane as a helical span at residues 437-463 (SHSQIEKSACIKLLIFTVWNSFFANVL). Over 464 to 489 (SGSALYRVNVFLEPKTIPRVLAAAVP) the chain is Extracellular. A helical transmembrane segment spans residues 490 to 512 (AQASFFVSYVVTSGWTGLSSEIL). Residues 513–540 (RLVPLLWSFITKLFGKEDDKEFEVPSTP) are Cytoplasmic-facing. A helical membrane pass occupies residues 541–561 (FCQEIPRILFFGLLGITYFFL). Position 562 (Ser-562) is a topological domain, extracellular. The chain crosses the membrane as a helical span at residues 563-586 (PLILPFLLVYYCLGYIIYRNQLLN). Residues 587-598 (VYAAKYETGGKF) are Cytoplasmic-facing. The chain crosses the membrane as a helical span at residues 599–623 (WPIVHSYTIFSLVLMHIIAVGLFGL). Residues 624 to 626 (KEL) lie on the Extracellular side of the membrane. The chain crosses the membrane as a helical span at residues 627–655 (PVASSLTIPLPVLTVLFSIYCQRRFLPNF). At 656 to 703 (KSYPTQCLVNKDKADEREQNMSEFYSELVVAYRDPALSASQDSRDISP) the chain is on the cytoplasmic side.

The protein belongs to the CSC1 (TC 1.A.17) family. In terms of assembly, homodimer.

It localises to the membrane. Functionally, acts as an osmosensitive calcium-permeable cation channel. The chain is Hyperosmolality-gated Ca2+ permeable channel 2.3 from Arabidopsis thaliana (Mouse-ear cress).